The primary structure comprises 94 residues: Large ribosomal subunit protein bL25 (94 aa).

It belongs to the bacterial ribosomal protein bL25 family. As to quaternary structure, part of the 50S ribosomal subunit; part of the 5S rRNA/L5/L18/L25 subcomplex. Contacts the 5S rRNA. Binds to the 5S rRNA independently of L5 and L18.

Functionally, this is one of the proteins that binds to the 5S RNA in the ribosome where it forms part of the central protuberance. This is Large ribosomal subunit protein bL25 from Pectobacterium atrosepticum (strain SCRI 1043 / ATCC BAA-672) (Erwinia carotovora subsp. atroseptica).